A 313-amino-acid polypeptide reads, in one-letter code: MLLLADMDVVNQLVAGGQFRVVKEPLGFVKVLQWVFAIFAFATCGSYSGELQLSVDCANKTKSDLNIEVEFEYPFRLHEVYFEAPTCQGDPKKIFLVGNYSSSAEFFVTVAVFAFLYSMGALATYIFLQNKYRENNKGPMLDFLATAVFAFMWLVSSSAWAKGLSDVKMATDPENIIKGMHVCHQPGNTCKELRDPVTSGLNTSVVFGFLNLVLWVGNLWFVFKETGWAAPFLRAPPGAPEKQPAPGDAYGQAGYGQGPGGYGPQDSYGPQGGYQPDYGQPASSGGGGYGPQGDYGQQGYGPQGAPTSFSNQM.

The Cytoplasmic segment spans residues 1 to 25; it reads MLLLADMDVVNQLVAGGQFRVVKEP. The MARVEL domain maps to 21 to 227; it reads VVKEPLGFVK…NLWFVFKETG (207 aa). Residues 26 to 49 traverse the membrane as a helical segment; it reads LGFVKVLQWVFAIFAFATCGSYSG. Topologically, residues 50-106 are vesicular; that stretch reads ELQLSVDCANKTKSDLNIEVEFEYPFRLHEVYFEAPTCQGDPKKIFLVGNYSSSAEF. The N-linked (GlcNAc...) asparagine glycan is linked to Asn-59. Tyr-81 bears the Phosphotyrosine mark. Asn-99 is a glycosylation site (N-linked (GlcNAc...) asparagine). The chain crosses the membrane as a helical span at residues 107–130; it reads FVTVAVFAFLYSMGALATYIFLQN. Over 131 to 137 the chain is Cytoplasmic; the sequence is KYRENNK. Residues 138–161 traverse the membrane as a helical segment; that stretch reads GPMLDFLATAVFAFMWLVSSSAWA. Over 162 to 199 the chain is Vesicular; the sequence is KGLSDVKMATDPENIIKGMHVCHQPGNTCKELRDPVTS. A helical transmembrane segment spans residues 200–223; it reads GLNTSVVFGFLNLVLWVGNLWFVF. Topologically, residues 224-313 are cytoplasmic; the sequence is KETGWAAPFL…GAPTSFSNQM (90 aa). The segment at 238-313 is disordered; sequence GAPEKQPAPG…GAPTSFSNQM (76 aa). Gly residues predominate over residues 253–263; it reads AGYGQGPGGYG. A repeats, Gly/Tyr-rich region spans residues 254-304; sequence GYGQGPGGYGPQDSYGPQGGYQPDYGQPASSGGGGYGPQGDYGQQGYGPQG. Positions 264–283 are enriched in low complexity; that stretch reads PQDSYGPQGGYQPDYGQPAS. The span at 284 to 302 shows a compositional bias: gly residues; that stretch reads SGGGGYGPQGDYGQQGYGP.

This sequence belongs to the synaptophysin/synaptobrevin family. In terms of assembly, homohexamer or homotetramer. Interacts with SRCIN1. Interacts with VAMP2; the interaction is inhibited by interaction of VAPM2 with SEPT8. Post-translationally, ubiquitinated; mediated by SIAH1 or SIAH2 and leading to its subsequent proteasomal degradation. Phosphorylated by SRC. As to expression, characteristic of a type of small (30-80 nm) neurosecretory vesicles, including presynaptic vesicles, but also vesicles of various neuroendocrine cells of both neuronal and epithelial phenotype.

It localises to the cytoplasmic vesicle. Its subcellular location is the secretory vesicle. It is found in the synaptic vesicle membrane. The protein localises to the synapse. The protein resides in the synaptosome. In terms of biological role, possibly involved in structural functions as organizing other membrane components or in targeting the vesicles to the plasma membrane. Involved in the regulation of short-term and long-term synaptic plasticity. The protein is Synaptophysin (SYP) of Bos taurus (Bovine).